Here is a 177-residue protein sequence, read N- to C-terminus: Large ribosomal subunit protein uL22 (177 aa).

The disordered stretch occupies residues 118 to 177; sequence VESRPSREGRRGGAGESAGGARARRAQGSKAAAAKKAPASSSKKAATTTEASEEAKGGSQ. The span at 121-130 shows a compositional bias: basic and acidic residues; sequence RPSREGRRGG. Residues 145–167 show a composition bias toward low complexity; that stretch reads GSKAAAAKKAPASSSKKAATTTE.

Belongs to the universal ribosomal protein uL22 family. Part of the 50S ribosomal subunit.

This protein binds specifically to 23S rRNA; its binding is stimulated by other ribosomal proteins, e.g. L4, L17, and L20. It is important during the early stages of 50S assembly. It makes multiple contacts with different domains of the 23S rRNA in the assembled 50S subunit and ribosome. Functionally, the globular domain of the protein is located near the polypeptide exit tunnel on the outside of the subunit, while an extended beta-hairpin is found that lines the wall of the exit tunnel in the center of the 70S ribosome. The sequence is that of Large ribosomal subunit protein uL22 from Mycobacterium sp. (strain KMS).